Reading from the N-terminus, the 199-residue chain is Probable adenine phosphoribosyltransferase (199 aa).

The protein belongs to the purine/pyrimidine phosphoribosyltransferase family. Homodimer.

It is found in the cytoplasm. The catalysed reaction is AMP + diphosphate = 5-phospho-alpha-D-ribose 1-diphosphate + adenine. It participates in purine metabolism; AMP biosynthesis via salvage pathway; AMP from adenine: step 1/1. Its function is as follows. Catalyzes a salvage reaction resulting in the formation of AMP, that is energically less costly than de novo synthesis. The sequence is that of Probable adenine phosphoribosyltransferase (aprt) from Dictyostelium discoideum (Social amoeba).